Consider the following 218-residue polypeptide: Tubulin polymerization-promoting protein (218 aa).

Positions 1 to 45 are disordered; the sequence is MADSKAKPTKAANKTPPKSPGDPAKAAKRLSLESEGANEGAAAAP. Residues 2-115 are mediates interaction with LIMK1; it reads ADSKAKPTKA…SCRTITFEQF (114 aa). The residue at position 15 (T15) is a Phosphothreonine. Phosphoserine occurs at positions 19, 31, and 34. Low complexity predominate over residues 33 to 45; sequence ESEGANEGAAAAP. Zn(2+) is bound by residues H60, H71, C79, and C82. Residue T91 is modified to Phosphothreonine. At S106 the chain carries Phosphoserine. Residue S151 is glycosylated (O-linked (GlcNAc) serine). A phosphoserine mark is found at S158 and S159. Residues 165–192 are disordered; it reads LTDTSKFTGSHKERFDQSGKGKGKAGRV. Over residues 174–183 the composition is skewed to basic and acidic residues; it reads SHKERFDQSG.

Belongs to the TPPP family. In terms of assembly, homodimer. Binds tubulin; binding is inhibited by GTP. Interacts with MAPK1. Interacts with GAPDH; the interaction is direct. Interacts with LIMK1 (via the PDZ domain); the interaction is direct. Interacts with LIMK2. Interacts with HDAC6; thereby inhibiting the tubulin deacetylase activity of HDAC6. Interacts with aggregated SNCA; may have a pro-aggregatory role in synucleinopathies. Interacts with DYNLL1. Interacts (via C-terminus) with S100A2, S100A6 and S100B; these interactions inhibit TPPP dimerization. Mg(2+) is required as a cofactor. Phosphorylated by LIMK1 on serine residues; phosphorylation may alter the tubulin polymerization activity. Phosphorylation by LIMK2, but not LIMK1, regulates astral microtubule organization at early stage of mitosis. Phosphorylation by ROCK1 at Ser-31, Ser-106 and Ser-158 inhibits interaction with HDAC6, resulting in decreased acetylation of tubulin, increased cell motility and entry into S-phase. Phosphorylation by CDK1 inhibits the microtubule polymerizing activity. Post-translationally, degraded by the proteasome; zinc-binding inhibits degradation by the proteasome. In terms of tissue distribution, predominantly expressed in mature oligodendrocytes.

The protein localises to the golgi outpost. The protein resides in the cytoplasm. It is found in the cytoskeleton. It localises to the microtubule organizing center. Its subcellular location is the nucleus. The protein localises to the spindle. It catalyses the reaction GTP + H2O = GDP + phosphate + H(+). In terms of biological role, regulator of microtubule dynamics that plays a key role in myelination by promoting elongation of the myelin sheath. Acts as a microtubule nucleation factor in oligodendrocytes: specifically localizes to the postsynaptic Golgi apparatus region, also named Golgi outpost, and promotes microtubule nucleation, an important step for elongation of the myelin sheath. Required for both uniform polarized growth of distal microtubules as well as directing the branching of proximal processes. Shows magnesium-dependent GTPase activity; the role of the GTPase activity is unclear. In addition to microtubule nucleation activity, also involved in microtubule bundling and stabilization of existing microtubules, thereby maintaining the integrity of the microtubule network. Regulates microtubule dynamics by promoting tubulin acetylation: acts by inhibiting the tubulin deacetylase activity of HDAC6. Also regulates cell migration: phosphorylation by ROCK1 inhibits interaction with HDAC6, resulting in decreased acetylation of tubulin and increased cell motility. Plays a role in cell proliferation by regulating the G1/S-phase transition. Involved in astral microtubule organization and mitotic spindle orientation during early stage of mitosis; this process is regulated by phosphorylation by LIMK2. The chain is Tubulin polymerization-promoting protein from Rattus norvegicus (Rat).